We begin with the raw amino-acid sequence, 316 residues long: PAK4-inhibitor inka2 (316 aa).

2 disordered regions span residues 43–74 and 108–130; these read RSSP…SHRT and YSEV…ESET. The span at 65 to 74 shows a compositional bias: basic and acidic residues; sequence RRDNRISHRT. A compositionally biased stretch (acidic residues) spans 119 to 129; that stretch reads EEDDIVEEESE. The inka box stretch occupies residues 182-219; it reads DSQDWTGCLLSQSRSRQPLVLGDNSFADLVKQWMDLPE.

Belongs to the INKA family.

The protein localises to the nucleus. Inhibitor of the serine/threonine-protein kinase pak4/pak5. Acts by binding pak4/pak5 in a substrate-like manner, inhibiting the protein kinase activity. This chain is PAK4-inhibitor inka2, found in Xenopus laevis (African clawed frog).